A 306-amino-acid chain; its full sequence is Ribonuclease H2 subunit B (306 aa).

Residues 232–285 are disordered; sequence LPDLSSPTPEPPVKKRKVSEAPVEAEEDYTKFNSDSKNKKSNSKMTAAQKSLAK. A compositionally biased stretch (basic and acidic residues) spans 259–269; sequence DYTKFNSDSKN.

The protein belongs to the RNase H2 subunit B family. The RNase H2 complex is a heterotrimer composed of the catalytic subunit rnaseh2a and the non-catalytic subunits rnaseh2b and rnaseh2c.

It localises to the nucleus. Non catalytic subunit of RNase H2, an endonuclease that specifically degrades the RNA of RNA:DNA hybrids. Participates in DNA replication, possibly by mediating the removal of lagging-strand Okazaki fragment RNA primers during DNA replication. Mediates the excision of single ribonucleotides from DNA:RNA duplexes. The polypeptide is Ribonuclease H2 subunit B (rnaseh2b) (Xenopus tropicalis (Western clawed frog)).